We begin with the raw amino-acid sequence, 248 residues long: AA9 family lytic polysaccharide monooxygenase G (248 aa).

Residues M1 to A21 form the signal peptide. Residue H22 coordinates Cu(2+). N58 is a glycosylation site (N-linked (GlcNAc...) asparagine). A disulfide bridge connects residues C77 and C195. A Cu(2+)-binding site is contributed by H107. Q190 provides a ligand contact to O2. Residue Y192 participates in Cu(2+) binding. An N-linked (GlcNAc...) asparagine glycan is attached at N203.

The protein belongs to the polysaccharide monooxygenase AA9 family. Cu(2+) is required as a cofactor.

It localises to the secreted. It carries out the reaction [(1-&gt;4)-beta-D-glucosyl]n+m + reduced acceptor + O2 = 4-dehydro-beta-D-glucosyl-[(1-&gt;4)-beta-D-glucosyl]n-1 + [(1-&gt;4)-beta-D-glucosyl]m + acceptor + H2O.. In terms of biological role, lytic polysaccharide monooxygenase (LPMO) that depolymerizes crystalline and amorphous polysaccharides via the oxidation of scissile alpha- or beta-(1-4)-glycosidic bonds, yielding C1 or C4 oxidation products. Catalysis by LPMOs requires the reduction of the active-site copper from Cu(II) to Cu(I) by a reducing agent and H(2)O(2) or O(2) as a cosubstrate. This is AA9 family lytic polysaccharide monooxygenase G from Malbranchea cinnamomea (Thermophilic fungus).